Reading from the N-terminus, the 145-residue chain is ATP synthase epsilon chain (145 aa).

The protein belongs to the ATPase epsilon chain family. In terms of assembly, F-type ATPases have 2 components, CF(1) - the catalytic core - and CF(0) - the membrane proton channel. CF(1) has five subunits: alpha(3), beta(3), gamma(1), delta(1), epsilon(1). CF(0) has three main subunits: a, b and c.

Its subcellular location is the cell membrane. In terms of biological role, produces ATP from ADP in the presence of a proton gradient across the membrane. The chain is ATP synthase epsilon chain from Buchnera aphidicola subsp. Baizongia pistaciae (strain Bp).